A 177-amino-acid polypeptide reads, in one-letter code: Nucleoside triphosphate/diphosphate phosphatase (177 aa).

Residue Arg-23 is the Proton donor of the active site. Positions 87, 103, 105, 107, 120, and 123 each coordinate Mg(2+).

It belongs to the Ntdp family. Mg(2+) is required as a cofactor.

The enzyme catalyses a ribonucleoside 5'-triphosphate + H2O = a ribonucleoside 5'-diphosphate + phosphate + H(+). It catalyses the reaction a ribonucleoside 5'-diphosphate + H2O = a ribonucleoside 5'-phosphate + phosphate + H(+). In terms of biological role, has nucleoside phosphatase activity towards nucleoside triphosphates and nucleoside diphosphates. In Streptococcus suis (strain 98HAH33), this protein is Nucleoside triphosphate/diphosphate phosphatase.